Consider the following 157-residue polypeptide: Thioredoxin 2 (157 aa).

The first 23 residues, 1 to 23 (MKKYIFFFLFSFINFFFVYDVTC), serve as a signal peptide directing secretion. Positions 46–157 (LRMFKKVPRL…DLIALIKKHL (112 aa)) constitute a Thioredoxin domain. Catalysis depends on nucleophile residues Cys-82 and Cys-85. Cys-82 and Cys-85 are joined by a disulfide.

The protein belongs to the thioredoxin family. Monomer. Component of the Plasmodium translocon of exported proteins (PTEX) complex composed of HSP101, EXP2, PTEX150, PTEX88 and TRX2. The disulfide bond between Cys-82 and Cys-85 acts as a redox-active center and is reduced by thioredoxin reductase TRXR.

It localises to the parasitophorous vacuole membrane. Functionally, participates in various redox reactions through the reversible oxidation of its active center dithiol to a disulfide and catalyzes dithiol-disulfide exchange reactions. As part of the translocon PTEX complex, plays a role in the export of parasite proteins into the host erythrocyte. The translocon PTEX complex is a multi-protein machinery resident in the parasite parasitophorous vacuolar membrane, responsible for protein secretion into host cells. May contribute to the unfolding of proteins containing the PEXEL localization motif before their passage through the translocon or regulate the PTEX complex function. The polypeptide is Thioredoxin 2 (Plasmodium falciparum (isolate 3D7)).